We begin with the raw amino-acid sequence, 493 residues long: Catalase A (493 aa).

Residues 1–24 are disordered; it reads MKRKLTGLFGAPVSDRENSMTAGP. Residues His53 and Asn126 contribute to the active site. Tyr336 is a binding site for heme.

Belongs to the catalase family. Homodimer. It depends on heme as a cofactor.

It catalyses the reaction 2 H2O2 = O2 + 2 H2O. Its function is as follows. Decomposes hydrogen peroxide into water and oxygen; serves to protect cells from the toxic effects of hydrogen peroxide. The protein is Catalase A (katA) of Staphylococcus xylosus.